A 1304-amino-acid polypeptide reads, in one-letter code: Histone-lysine N-methyltransferase met-2 (1304 aa).

Residues 1–16 (MDQQEPSNNVDTSSIL) are compositionally biased toward polar residues. The tract at residues 1–31 (MDQQEPSNNVDTSSILSDDGMETQEQSSFVT) is disordered. A coiled-coil region spans residues 97–129 (NESEQEAVAAQRRVDAEKTAKDEAELKQQEEAE). An MBD domain is found at 834-909 (FHRNSPIHTP…FSFDARIDTA (76 aa)). The region spanning 971-1049 (SGCSCDGDCS…SCYNRVVQNN (79 aa)) is the Pre-SET domain. Zn(2+)-binding residues include C973, C975, C979, C985, C987, C1030, C1034, C1036, and C1041. One can recognise an SET domain in the interval 1052-1277 (YPMHIFKTAQ…AGDELTWDYQ (226 aa)). S-adenosyl-L-methionine contacts are provided by residues 1062-1064 (SGW), D1098, and Y1100. The span at 1113–1122 (EKGREDHETD) shows a compositional bias: basic and acidic residues. Positions 1113–1201 (EKGREDHETD…DSMEKDNIES (89 aa)) are disordered. Positions 1128–1144 (DESDYDDEEGSDGDSGD) are enriched in acidic residues. Residues 1152-1165 (KRQDSSESGEETKR) show a composition bias toward basic and acidic residues. Positions 1166–1178 (LTRQKRKQSKKSG) are enriched in basic residues. Basic and acidic residues predominate over residues 1182–1201 (SVEKDDTTPRDSMEKDNIES). Residues R1231 and 1234–1235 (NH) each bind S-adenosyl-L-methionine. C1237, C1290, C1292, and C1297 together coordinate Zn(2+). The 17-residue stretch at 1286-1302 (TQLTCHCGAENCTGRLL) folds into the Post-SET domain.

Belongs to the class V-like SAM-binding methyltransferase superfamily.

The protein localises to the nucleus. It localises to the chromosome. Its subcellular location is the cytoplasm. It carries out the reaction N(6)-methyl-L-lysyl(9)-[histone H3] + S-adenosyl-L-methionine = N(6),N(6)-dimethyl-L-lysyl(9)-[histone H3] + S-adenosyl-L-homocysteine + H(+). The catalysed reaction is L-lysyl(9)-[histone H3] + S-adenosyl-L-methionine = N(6)-methyl-L-lysyl(9)-[histone H3] + S-adenosyl-L-homocysteine + H(+). In terms of biological role, histone methyltransferase which is required for the mono- and dimethylation of 'Lys-9' of histone H3. This increases the efficiency of set-25-mediated trimethylation of histone H3 'Lys-9'. Involved in the transcriptional repression of lin-3 which is required for the negative regulation of vulval cell fate specification during postembryonic development. Has a role in blocking checkpoint signaling and mediating the transcriptional silencing of meiotic sex chromosome inactivation; a mechanism which enables checkpoint proteins to distinguish between the partnerless male X chromosome and asynapsed chromosomes thereby shielding the lone X from inappropriate activation of an apoptotic program. Operates redundantly with set-25 to position chromatin at the nuclear periphery. Required for small-RNA-induced H3K9 methylation. Together with set-25, protects and stabilizes repeat-rich genomic regions by suppressing transcription-induced replication stress through methylation of H3K9. Together with spr-5, required for transgenerational fertility. The polypeptide is Histone-lysine N-methyltransferase met-2 (met-2) (Caenorhabditis elegans).